The chain runs to 407 residues: Na(+)-translocating NADH-quinone reductase subunit F (407 aa).

The helical transmembrane segment at 3-23 threads the bilayer; that stretch reads IILGVVMFTLIVLALVLVILF. The 95-residue stretch at 32 to 126 folds into the 2Fe-2S ferredoxin-type domain; that stretch reads GDITISINGD…DMDIELPEEI (95 aa). The [2Fe-2S] cluster site is built by C69, C75, C78, and C110. An FAD-binding FR-type domain is found at 129–269; it reads VKKWECTVIS…SGPFGEFFAK (141 aa). The tract at residues 272–389 is catalytic; the sequence is DAEMVFIGGG…PMMNAAVIGM (118 aa).

This sequence belongs to the NqrF family. Composed of six subunits; NqrA, NqrB, NqrC, NqrD, NqrE and NqrF. Requires [2Fe-2S] cluster as cofactor. It depends on FAD as a cofactor.

Its subcellular location is the cell inner membrane. The catalysed reaction is a ubiquinone + n Na(+)(in) + NADH + H(+) = a ubiquinol + n Na(+)(out) + NAD(+). In terms of biological role, NQR complex catalyzes the reduction of ubiquinone-1 to ubiquinol by two successive reactions, coupled with the transport of Na(+) ions from the cytoplasm to the periplasm. The first step is catalyzed by NqrF, which accepts electrons from NADH and reduces ubiquinone-1 to ubisemiquinone by a one-electron transfer pathway. This is Na(+)-translocating NADH-quinone reductase subunit F from Vibrio vulnificus (strain CMCP6).